The primary structure comprises 248 residues: Inhibitor of growth protein 4 (248 aa).

Residues 25–118 (FQLMRDLDQR…ADLKEKQIES (94 aa)) adopt a coiled-coil conformation. 3 positions are modified to N6-acetyllysine: K112, K127, and K129. A disordered region spans residues 115–160 (QIESSDYDSSSSKGKKSRTQKEKKAARARSKGKNSDEEAPKAAQKK). The Bipartite nuclear localization signal motif lies at 127 to 147 (KGKKSRTQKEKKAARARSKGK). R132 bears the Citrulline mark. N6-acetyllysine is present on residues K145, K147, and K155. A Citrulline modification is found at R165. The segment at 195–244 (PTYCLCHQVSYGEMIGCDNPDCSIERFHFACVGLTTKPRGKWFCPRCSQE) adopts a PHD-type zinc-finger fold. The Zn(2+) site is built by C198, C200, C211, C216, H222, C225, C238, and C241.

The protein belongs to the ING family. As to quaternary structure, homodimer. Component of the HBO1 complex composed of KAT7/HBO1, MEAF6, ING4 or ING5, and one scaffold subunit: complexes containing BRPF scaffold (BRPF1, BRD1/BRPF2 or BRPF3) direct KAT7/HBO1 specificity towards H3K14ac, while complexes containing JADE scaffold (JADE1, JADE2 and JADE3) mediate acetylation of histone H4. Interacts with H3K4me3 and to a lesser extent with H3K4me2, the interaction augments KAT7/HBO1 acetylation activity on H3 tails. Interacts with EP300, RELA and TP53; these interactions may be indirect. Interacts with EGLN1. Interacts with BCL2A1. Citrullination by PADI4 within the nuclear localization signal disrupts the interaction with p53 and increases susceptibility to degradation.

It is found in the nucleus. Its function is as follows. Component of HBO1 complexes, which specifically mediate acetylation of histone H3 at 'Lys-14' (H3K14ac), and have reduced activity toward histone H4. Through chromatin acetylation it may function in DNA replication. May inhibit tumor progression by modulating the transcriptional output of signaling pathways which regulate cell proliferation. Can suppress brain tumor angiogenesis through transcriptional repression of RELA/NFKB3 target genes when complexed with RELA. May also specifically suppress loss of contact inhibition elicited by activated oncogenes such as MYC. Represses hypoxia inducible factor's (HIF) activity by interacting with HIF prolyl hydroxylase 2 (EGLN1). Can enhance apoptosis induced by serum starvation in mammary epithelial cell line HC11. This Bos taurus (Bovine) protein is Inhibitor of growth protein 4 (ING4).